We begin with the raw amino-acid sequence, 160 residues long: Protein cornichon homolog 2 (160 aa).

At 1-10 (MAFTFAAFCY) the chain is on the cytoplasmic side. The helical transmembrane segment at 11–31 (MLTLVLCAALIFFVIWQIIAF) threads the bilayer. At 32–72 (DELRTDFKNPIDQSNPTRARERILNIERICNLLRRLVVPEY) the chain is on the lumenal side. A helical transmembrane segment spans residues 73–93 (SIHGLFCLMFMCAGEWVTLGL). Residues 94 to 138 (NIPLLLYHLWRFFHRPADGSEVMYDPVSVMNADILNYCQKESWCK) lie on the Cytoplasmic side of the membrane. Residues 139–159 (LGFYLLSFFYYLYSMVYALVS) traverse the membrane as a helical segment. Position 160 (F160) is a topological domain, lumenal.

Belongs to the cornichon family.

It localises to the membrane. Regulates the trafficking and gating properties of AMPA-selective glutamate receptors (AMPARs). The polypeptide is Protein cornichon homolog 2 (cnih2) (Danio rerio (Zebrafish)).